The following is a 277-amino-acid chain: Shikimate dehydrogenase (NADP(+)) (277 aa).

Shikimate is bound by residues 15–17 and T62; that span reads SLS. The active-site Proton acceptor is the K66. Residues N87 and D102 each contribute to the shikimate site. NADP(+) contacts are provided by residues 127–131, 151–156, and I219; these read GAGGA and NRTVDK. Y221 serves as a coordination point for shikimate. NADP(+) is bound at residue G242.

The protein belongs to the shikimate dehydrogenase family. In terms of assembly, homodimer.

The enzyme catalyses shikimate + NADP(+) = 3-dehydroshikimate + NADPH + H(+). It functions in the pathway metabolic intermediate biosynthesis; chorismate biosynthesis; chorismate from D-erythrose 4-phosphate and phosphoenolpyruvate: step 4/7. In terms of biological role, involved in the biosynthesis of the chorismate, which leads to the biosynthesis of aromatic amino acids. Catalyzes the reversible NADPH linked reduction of 3-dehydroshikimate (DHSA) to yield shikimate (SA). The chain is Shikimate dehydrogenase (NADP(+)) from Bacillus thuringiensis subsp. konkukian (strain 97-27).